Here is a 127-residue protein sequence, read N- to C-terminus: Small ribosomal subunit protein uS11 (127 aa).

The protein belongs to the universal ribosomal protein uS11 family. As to quaternary structure, part of the 30S ribosomal subunit.

Functionally, located on the platform of the 30S subunit. This chain is Small ribosomal subunit protein uS11, found in Halobacterium salinarum (strain ATCC 700922 / JCM 11081 / NRC-1) (Halobacterium halobium).